The chain runs to 55 residues: Large ribosomal subunit protein bL32 (55 aa).

The segment covering 1–19 (MAVPKRRMSRANTHSRRSQ) has biased composition (basic residues). Positions 1 to 20 (MAVPKRRMSRANTHSRRSQW) are disordered.

This sequence belongs to the bacterial ribosomal protein bL32 family.

In Corynebacterium jeikeium (strain K411), this protein is Large ribosomal subunit protein bL32.